Consider the following 504-residue polypeptide: Protein phosphatase 1J (504 aa).

Disordered regions lie at residues M1–W102 and P194–S217. Residues S14–S23 show a composition bias toward low complexity. A Phosphothreonine modification is found at T41. Polar residues predominate over residues T59–Q73. S65 and S75 each carry phosphoserine. In terms of domain architecture, PPM-type phosphatase spans S103 to L496. Positions L197–S217 are enriched in low complexity.

Belongs to the PP2C family. As to quaternary structure, interacts with UBE2I/UBC9.

It carries out the reaction O-phospho-L-seryl-[protein] + H2O = L-seryl-[protein] + phosphate. It catalyses the reaction O-phospho-L-threonyl-[protein] + H2O = L-threonyl-[protein] + phosphate. The chain is Protein phosphatase 1J (Ppm1j) from Rattus norvegicus (Rat).